The sequence spans 63 residues: Large ribosomal subunit protein uL29 (63 aa).

The protein belongs to the universal ribosomal protein uL29 family.

In Shewanella baltica (strain OS223), this protein is Large ribosomal subunit protein uL29.